Reading from the N-terminus, the 51-residue chain is Methionine aminopeptidase (51 aa).

This sequence belongs to the peptidase M24A family. Methionine aminopeptidase type 1 subfamily. In terms of assembly, monomer. The cofactor is Co(2+). It depends on Zn(2+) as a cofactor. Mn(2+) serves as cofactor. Fe(2+) is required as a cofactor.

The catalysed reaction is Release of N-terminal amino acids, preferentially methionine, from peptides and arylamides.. Functionally, removes the N-terminal methionine from nascent proteins. The N-terminal methionine is often cleaved when the second residue in the primary sequence is small and uncharged (Met-Ala-, Cys, Gly, Pro, Ser, Thr, or Val). Requires deformylation of the N(alpha)-formylated initiator methionine before it can be hydrolyzed. The sequence is that of Methionine aminopeptidase (map) from Geobacillus stearothermophilus (Bacillus stearothermophilus).